The sequence spans 1362 residues: DNA-directed RNA polymerase subunit beta' (1362 aa).

Basic residues predominate over residues 1–14 (MTSSSKSRKSKSSK). Residues 1 to 39 (MTSSSKSRKSKSSKASKAAKEAPVSASRPLSKTPPPFRN) form a disordered region. The span at 15 to 27 (ASKAAKEAPVSAS) shows a compositional bias: low complexity. 4 residues coordinate Zn(2+): C248, C315, C322, and C325. The segment at 1316-1336 (TRHNIDPSASNFAAFTRPDAD) is disordered.

It belongs to the RNA polymerase beta' chain family. RpoC2 subfamily. In cyanobacteria the RNAP catalytic core is composed of 2 alpha, 1 beta, 1 beta', 1 gamma and 1 omega subunit. When a sigma factor is associated with the core the holoenzyme is formed, which can initiate transcription. Zn(2+) is required as a cofactor.

The enzyme catalyses RNA(n) + a ribonucleoside 5'-triphosphate = RNA(n+1) + diphosphate. DNA-dependent RNA polymerase catalyzes the transcription of DNA into RNA using the four ribonucleoside triphosphates as substrates. This chain is DNA-directed RNA polymerase subunit beta', found in Synechococcus sp. (strain CC9605).